Consider the following 461-residue polypeptide: Glycerol-3-phosphate acyltransferase, chloroplastic (461 aa).

Residues 1–96 constitute a chloroplast transit peptide; that stretch reads MSMTGSSAYY…SPPNMSASVS (96 aa). A compositionally biased stretch (low complexity) spans 47–76; that stretch reads LLSSTSSSSSSSISLRSSTAPSPSCSSVTP. The disordered stretch occupies residues 47 to 88; the sequence is LLSSTSSSSSSSISLRSSTAPSPSCSSVTPKDNCLASAKHSP. Positions 231 to 236 match the HXXXXD motif motif; it reads HQTEAD.

This sequence belongs to the GPAT/DAPAT family.

It is found in the plastid. Its subcellular location is the chloroplast stroma. The enzyme catalyses sn-glycerol 3-phosphate + an acyl-CoA = a 1-acyl-sn-glycero-3-phosphate + CoA. It participates in phospholipid metabolism; CDP-diacylglycerol biosynthesis; CDP-diacylglycerol from sn-glycerol 3-phosphate: step 1/3. Functionally, esterifies acyl-group from acyl-ACP to the sn-1 position of glycerol-3-phosphate. The enzyme from chilling-resistant plants discriminates against non-fluid palmitic acid and selects oleic acid whereas the enzyme from sensitive plants accepts both fatty acids. This is Glycerol-3-phosphate acyltransferase, chloroplastic (PLSB) from Phaseolus vulgaris (Kidney bean).